The chain runs to 554 residues: Phosphoglucomutase (554 aa).

Arg21 contacts alpha-D-glucose 1,6-bisphosphate. Thr111 is modified (phosphothreonine). Ser113 contributes to the alpha-D-glucose 1,6-bisphosphate binding site. Ser113 functions as the Phosphoserine intermediate in the catalytic mechanism. Positions 113, 278, 280, and 282 each coordinate Mg(2+). Ser113 bears the Phosphoserine mark. Residues Asp282, Arg283, Thr346, Glu365, Ser367, and Lys378 each coordinate alpha-D-glucose 1,6-bisphosphate.

This sequence belongs to the phosphohexose mutase family. As to quaternary structure, monomer. Mg(2+) is required as a cofactor.

It is found in the cytoplasm. The protein localises to the nucleus. The enzyme catalyses alpha-D-glucose 1-phosphate = alpha-D-glucose 6-phosphate. It carries out the reaction O-phospho-L-seryl-[protein] + alpha-D-glucose 1-phosphate = alpha-D-glucose 1,6-bisphosphate + L-seryl-[protein]. The catalysed reaction is alpha-D-glucose 1,6-bisphosphate + L-seryl-[protein] = O-phospho-L-seryl-[protein] + alpha-D-glucose 6-phosphate. Its function is as follows. Catalyzes the reversible isomerization of alpha-D-glucose 1-phosphate to alpha-D-glucose 6-phosphate. The mechanism proceeds via the intermediate compound alpha-D-glucose 1,6-bisphosphate. Key enzyme in hexose metabolism. The reverse reaction is an essential step for biosynthesis because glucose 1-phosphate is the starting point for the synthesis of UDP-glucose, which acts as a precursor for the synthesis of oligosaccharides and trehalose. This is Phosphoglucomutase from Schizosaccharomyces pombe (strain 972 / ATCC 24843) (Fission yeast).